The following is a 148-amino-acid chain: Large ribosomal subunit protein uL13 (148 aa).

It belongs to the universal ribosomal protein uL13 family. In terms of assembly, part of the 50S ribosomal subunit.

This protein is one of the early assembly proteins of the 50S ribosomal subunit, although it is not seen to bind rRNA by itself. It is important during the early stages of 50S assembly. The chain is Large ribosomal subunit protein uL13 from Ureaplasma parvum serovar 3 (strain ATCC 27815 / 27 / NCTC 11736).